The following is a 169-amino-acid chain: MAVLQVLHIPDERLRKVAKPVEEVNAEIQRIVDDMFETMYAEEGIGLAATQVDIHQRIIVIDVSENRDERLVLINPELLEKSGETGIEEGCLSIPEQRALVPRAEKVKIRALDRDGKSFELEADGLLAICIQHEMDHLVGKLFIDYLSPLKQQRIRQKVEKLDRLNARA.

Residues Cys-91 and His-133 each coordinate Fe cation. Glu-134 is a catalytic residue. His-137 contributes to the Fe cation binding site.

It belongs to the polypeptide deformylase family. Fe(2+) is required as a cofactor.

It carries out the reaction N-terminal N-formyl-L-methionyl-[peptide] + H2O = N-terminal L-methionyl-[peptide] + formate. Functionally, removes the formyl group from the N-terminal Met of newly synthesized proteins. Requires at least a dipeptide for an efficient rate of reaction. N-terminal L-methionine is a prerequisite for activity but the enzyme has broad specificity at other positions. The polypeptide is Peptide deformylase (Citrobacter koseri (strain ATCC BAA-895 / CDC 4225-83 / SGSC4696)).